The sequence spans 530 residues: Developmental and secondary metabolism regulator VEL1 (530 aa).

The 195-residue stretch at 26-220 (NRSLWYQMTV…ADQGCQVRIR (195 aa)) folds into the Velvet domain. Positions 40–45 (ERARAC) match the Nuclear localization signal motif. Positions 206-516 (LSKTVADQGC…HDQGWYSRAD (311 aa)) are disordered. The segment covering 244–253 (FERREEDFGR) has biased composition (basic and acidic residues). Pro residues predominate over residues 295–305 (YPPPPPPPSYE). Positions 347–356 (YAPTAQSPYS) are enriched in polar residues. Basic and acidic residues predominate over residues 380 to 389 (VKHDLYDRRQ). Residues 390–404 (STSSYVPPSPSVYST) are compositionally biased toward low complexity. Over residues 415 to 426 (SYPPTPVAAPRP) the composition is skewed to pro residues. The interval 429–460 (MHSQTSLPALKIDQLVSPVSPLPPIEPQTGPA) is PEST. The span at 478 to 490 (FAQSTRPLHNGQR) shows a compositional bias: polar residues.

This sequence belongs to the velvet family. VeA subfamily. In terms of assembly, component of the heterotrimeric velvet complex composed of LAE1, VEL1 and VEL2; VEL1 acting as a bridging protein between LAE1 and VEL2. Interacts with LAE1.

Its subcellular location is the nucleus. It localises to the cytoplasm. In terms of biological role, component of the velvet transcription factor complex that controls sexual/asexual developmental ratio in response to light, promoting sexual development in the darkness while stimulating asexual sporulation under illumination. The velvet complex hat acts as a global regulator for secondary metabolite gene expression. Controls positively the expression of the gibberellins, fumonisins and fusarin C gene clusters. Controls the expression of the fusaric acid gene cluster. Controls negatively the expression of the bikaverin gene cluster. Regulates the expression of laeA. Plays a crucial role in virulence. This Gibberella fujikuroi (strain CBS 195.34 / IMI 58289 / NRRL A-6831) (Bakanae and foot rot disease fungus) protein is Developmental and secondary metabolism regulator VEL1.